We begin with the raw amino-acid sequence, 236 residues long: tRNA (guanine-N(1)-)-methyltransferase (236 aa).

S-adenosyl-L-methionine is bound by residues glycine 114 and 134–139; that span reads IGDYIL.

This sequence belongs to the RNA methyltransferase TrmD family. In terms of assembly, homodimer.

The protein resides in the cytoplasm. The enzyme catalyses guanosine(37) in tRNA + S-adenosyl-L-methionine = N(1)-methylguanosine(37) in tRNA + S-adenosyl-L-homocysteine + H(+). Specifically methylates guanosine-37 in various tRNAs. This Wolbachia pipientis wMel protein is tRNA (guanine-N(1)-)-methyltransferase.